The sequence spans 290 residues: Nucleoid occlusion protein (290 aa).

The segment at residues 153-172 is a DNA-binding region (H-T-H motif); that stretch reads EALAQRLGKGQSTIANKLRL.

Belongs to the ParB family.

It localises to the cytoplasm. The protein resides in the nucleoid. Effects nucleoid occlusion by binding relatively nonspecifically to DNA and preventing the assembly of the division machinery in the vicinity of the nucleoid, especially under conditions that disturb the cell cycle. It helps to coordinate cell division and chromosome segregation by preventing the formation of the Z ring through the nucleoid, which would cause chromosome breakage. This is Nucleoid occlusion protein from Bacillus cereus (strain G9842).